The following is a 137-amino-acid chain: Methylmalonyl-CoA decarboxylase subunit delta (137 aa).

The helical transmembrane segment at 30–50 (VTVVLGMGITVVALIFLMYII) threads the bilayer.

The protein belongs to the OadG family. In terms of assembly, the methylmalonyl-CoA decarboxylase is composed of four subunits: the carboxyltransferase alpha subunit (MmdA), the tunnel beta subunit (MmdB), the biotin-containing gamma subunit (MmdC) and the delta subunit (MmdD).

It is found in the cell membrane. The enzyme catalyses (S)-methylmalonyl-CoA + Na(+)(in) + H(+)(out) = propanoyl-CoA + Na(+)(out) + CO2. Functionally, subunit of the sodium ion pump methylmalonyl-CoA decarboxylase, which converts the chemical energy of a decarboxylation reaction into an electrochemical gradient of Na(+) ions across the cytoplasmic membrane, thereby creating a sodium ion motive force that is used for ATP synthesis. The delta subunit is required for catalytic activity as well as for the proper assembly of the individual subunits to an enzyme complex. In Propionigenium modestum, this protein is Methylmalonyl-CoA decarboxylase subunit delta.